A 278-amino-acid polypeptide reads, in one-letter code: Small ribosomal subunit protein uS3 (278 aa).

The 69-residue stretch at 39-107 (VRDFLKKRLA…PVHVNIEEVR (69 aa)) folds into the KH type-2 domain. Residues 217–278 (VENENEARRG…DAAAVEKEVS (62 aa)) are disordered. Basic and acidic residues predominate over residues 230 to 239 (PRNDAGDNRG).

It belongs to the universal ribosomal protein uS3 family. In terms of assembly, part of the 30S ribosomal subunit. Forms a tight complex with proteins S10 and S14.

Binds the lower part of the 30S subunit head. Binds mRNA in the 70S ribosome, positioning it for translation. In Aromatoleum aromaticum (strain DSM 19018 / LMG 30748 / EbN1) (Azoarcus sp. (strain EbN1)), this protein is Small ribosomal subunit protein uS3.